The sequence spans 326 residues: Diaminopimelate epimerase (326 aa).

2 residues coordinate substrate: asparagine 13 and asparagine 72. Cysteine 81 (proton donor) is an active-site residue. Substrate is bound by residues 82 to 83 (GN), asparagine 169, asparagine 205, and 223 to 224 (ER). Cysteine 232 acts as the Proton acceptor in catalysis. 233 to 234 (GT) lines the substrate pocket.

This sequence belongs to the diaminopimelate epimerase family. As to quaternary structure, homodimer.

It localises to the cytoplasm. It carries out the reaction (2S,6S)-2,6-diaminopimelate = meso-2,6-diaminopimelate. Its pathway is amino-acid biosynthesis; L-lysine biosynthesis via DAP pathway; DL-2,6-diaminopimelate from LL-2,6-diaminopimelate: step 1/1. Its function is as follows. Catalyzes the stereoinversion of LL-2,6-diaminopimelate (L,L-DAP) to meso-diaminopimelate (meso-DAP), a precursor of L-lysine and an essential component of the bacterial peptidoglycan. This is Diaminopimelate epimerase from Enterococcus faecalis (strain ATCC 700802 / V583).